Reading from the N-terminus, the 3471-residue chain is MANRRVGRGCWEVSPTERRPPAAEEEASSPPVLSLSHFCRSPFLCFGDVLLGASRTLSLALDNPNEEVAEVKISHFPAADLGFSVSQRCFVLQPKEKIVISVNWTPFKEGRVREIMTFLVNDVLKHQAILLGNAEEQKKKKRSLWDTIKKKKISASTSHNRRVSNIQNVNKTFSVSQKVDRVRSPLQACENLAMNEGGPPTENNSLTLEGNKIPISPISPAFNECHGETCLPLSVRRSTTYSSLHASENRELLNVDSASVSKVSFNEKAVTETSFNSINVNGQSGENSKLSLTPNYSSTLNITQSQIHFLSPDSFVNNSHGANNELELVTCLSSDMFMKDNSKPVHLESTIAHEIYQKILSPDSFIKDNYGLNQDVESESVNPILSPNQFLKDNMAYMCTSQQTCKVPLSNENSQVPQSPQDWRKSEVLPRIPECQGSKSPKAIFEELVEMKSNYYSFIKQNNPKFSVVQDISSHSHNKQPKRRPILSATVTKRKATCTRENQTEINKPKAKRCLNSAVGEHEKVINNQKEKEDFHSYLPIIDPILSKSKSYKNEVTPSSTTASVARKRKSDGSMEDADVRVAVTEHTEVREIKRIHFSPSEPKTSAVKKTKNVITPISKRISNREKLNLKKKTDLSIFKTPISKTNKRTKPIIAVAQSNLTFIKPLKTDIPRHPMPFAAKNMFYDERWKEKQEQGFTWWLNFILTPDDFTVKTNISEVNAATLLLGIENQHKISVPRAPTKEEMSLRAYTARCRLNRLRRAACRLFTSEKMIKAIKKLEIEIEARRLIVRKDRHLWKDVGERQKVLNWLLSYNPLWLRIGLETTYGELISLEDNSDVTGLAMFILNRLLWNPDIAAEYRHPTVPHLYRDGHEEALSKFTLKKLLLLVCFLDYAKISRLIDHDPCLFCKDAEFKASKEILLAFSRDFLSGEGDLSRHLGLLGLPVNHVQTPFDEFDFAVTNLAVDLQCGVRLVRTMELLTQNWDLSKKLRIPAISRLQKMHNVDIVLQVLKSRGIELSDEHGNTILSKDIVDRHREKTLRLLWKIAFAFQVDISLNLDQLKEEIAFLKHTKSIKKTISLLSCHSDDLINKKKGKRDSGSFEQYSENIKLLMDWVNAVCAFYNKKVENFTVSFSDGRVLCYLIHHYHPCYVPFDAICQRTTQTVECTQTGSVVLNSSSESDDSSLDMSLKAFDHENTSELYKELLENEKKNFHLVRSAVRDLGGIPAMINHSDMSNTIPDEKVVITYLSFLCARLLDLRKEIRAARLIQTTWRKYKLKTDLKRHQEREKAARIIQSAVINFLAKQRLRKRVNAALVVQKYWRRVLAQRKLLMLKKEKLEKVQNKAASLIQGYWRRYSTRRRFLKLKYYSIILQSRIRMIIAVTSYKRYLWATVTIQRHWRAYLRRKQDQQRYEMLKSSTLIIQSMFRKWKRRKMQSQVKATVILQRAFREWHLRKQAKEENSAIVIQSWYRMHKELRKYIYIRSCVVIIQKRFRCFQAQKLYKRKKESILTIQKYYKAYLKGKIERTNYLQKRAAAIQLQAAFRRLKAHNLCRQIRAAGVIQSYWRMRQDRVRFLNLKKTIIKLQAHVRKHQQLQKYKKMKKAAVIIQTHFRAYIFARKVLASYQKTRSAVIVLQSAYRGMQARKMYIHILTSVIKIQSYYRAYVSKKEFLSLKNATIKLQSIVKVKQTRKQYLHLRAAALFIQQCYRSKKIAAQKREEYMQMRESCIKLQAFVRGYRVRKQMRLQRKAVISLQSYFRMRKARQYYLKMYKAIIVIQNYYHAYKAQVNQRKNFLQVKKAATCLQAAYRGYKVRQLIKQQSIAALKIQSAFRGYNKRIKYQSVLQSIIKIQRWYRAYKTLHDTRTHFLKTKAAVISLQSTYRGWKVRKQIRREHQAALKIQSAFRMAKARKQFRLFKTAALVIQQNFRAWTAGRKQRMEYIELRHAVLMLQSMWKGKTLRRQLQRQHKCAIIIQSYYRMHVQQKKWKIMKKAALLIQKYYRAYSIGREQNHLYLKTKAAVVTLQSAYRGMKVRKRIKDCNKAAVTIQSKYRAYKTKKKYATYRASAIIIQRWYRGIKITNHQHKEYLNLKKTAIKIQSVYRGIRVRRHIQHMHRAATFIKAMFKMHQSRISYHTMRKAAIVIQVRFRAYYQGKMQHEKYLTILKAVKILQASFRGVRVRRTLRKMQIAATLIQSNYRRYRQQTYFNKLKKITKTVQQRYRAMKERNIQFQRYNKLRHSVIYIQAIFRGKKARRHLKMMHIAATLIQRRFRTLMMRRRFLSLKKTAIWIQRKYRAHLYTKHHLQFLRVQNAVIKIQSSYRRWMIRKRMREMHRAATFIQAIFRMRRLHMRYQALKQASVVIQQQYQANRAAKLQRQHYLRQRHSAVILQAAFRGMKTRRHLKSMHSSATLIQSRFRSLLVRRRFISLKKATIFVQRKYRATICAKHKLHQFLHLRKSAITIQSSYRRLMVKKKLQEMQRAAVLIQATFRMHRTYITFQTWKHASILIQQHYRTYRAAKLQRENYIRQWHSAVVIQAAYKGMKARQLLREKHKAAIIIQSTYRMYRQYCFYQKLQWATKIIQEKYRANKKKQKAFQHNELKKETCVQAGFQDMNIKKQIQDQHQAAIIIQKNCKAFKIRKHYLHLRATVVSIQRRYRKLTAVRTQAVICIQSYYRGFKVRKDIQNMHRAATLIQSFYRMHRAKVDYQTKKTAIVVIQNYYRLYVRVKTERKSFLAVQKSVRTIQPAFRGMKVRQKLKNLSEEKMAAIVNQSALCCYRSKTQYEAVQSEGVMIQEWYKASGLACSQEAEYHSQSRAAVTIQKAFCRMATRKLETQKCAALRIQFFLQMAVYRRRFVQQKRAAITLQHYFRTWQTRKQFLLYRKAAVVLQNHYRAFLSAKHQRQVYLQIRSSVIIIQARSKGFIQKRKFQEIKNSTIKIQAIWRRYRAKKYLCKVKAACKIQAWYRCWRAHKEYLAILKAVKIIQGCFYTKLERTRFLNVRASAIIIQRKWRAILSAKIAHEHFLMIKRHRATCLIQAHYRGYKGRQVFLRQKSAALVIQKYIRAREAGKRERIKYIEFKKSTVILQALVRGWLVRKRILEQRAKIRLLHFTAAAYYHLNALRIQRAYKLYLAVKNANKQVNSVICIQRWFRARLQRKRFIQKYHSIKKIEHEGQECLSQQNRAASVIQKAVRHFLLRKKQEKFTSGIIKIQALWRGYSWRKKNDCTKIKAIRLSLQVVNREIREENKLYKRTALALHYLLTYKHLSAILEALKHLEVVTRLSPLCCENMAQSGAISKIFVLIRSCNRSVPCMEVIRYAVQVLLNVSKYEKTTSAVYDVENCIDILLELLQIYREKPGNKVADKGGSIFTKTCCLLAILLKTTNRASDVRSRSKVVDRIYSLYKLTAHKHKMNTERILYKQKKNSSISIPFIPETPVRTRIVSRLKPNWVLRRDNMEEITNPLQAIQMVMDTLGIPY.

Residues 1–26 (MANRRVGRGCWEVSPTERRPPAAEEE) form a disordered region. Serine 274, serine 277, serine 361, serine 386, and serine 419 each carry phosphoserine. Positions 555-564 (EVTPSSTTAS) are enriched in polar residues. The interval 555–576 (EVTPSSTTASVARKRKSDGSME) is disordered. The residue at position 599 (serine 599) is a Phosphoserine. A Calponin-homology (CH) 1 domain is found at 914–1050 (KASKEILLAF…LLWKIAFAFQ (137 aa)). Residues 1051 to 1072 (VDISLNLDQLKEEIAFLKHTKS) adopt a coiled-coil conformation. Residue serine 1097 is modified to Phosphoserine. The Calponin-homology (CH) 2 domain occupies 1104–1255 (SENIKLLMDW…YLSFLCARLL (152 aa)). 39 consecutive IQ domains span residues 1341-1372 (QNKAASLIQGYWRRYSTRRRFLKLKYYSIILQ), 1387-1416 (YLWATVTIQRHWRAYLRRKQDQQRYEMLKS), 1576-1607 (LKKTIIKLQAHVRKHQQLQKYKKMKKAAVIIQ), 1599-1628 (MKKAAVIIQTHFRAYIFARKVLASYQKTRS), 1626-1655 (TRSAVIVLQSAYRGMQARKMYIHILTSVIK), 1649-1678 (ILTSVIKIQSYYRAYVSKKEFLSLKNATIK), 1722-1751 (MRESCIKLQAFVRGYRVRKQMRLQRKAVIS), 1745-1776 (QRKAVISLQSYFRMRKARQYYLKMYKAIIVIQ), 1795-1824 (VKKAATCLQAAYRGYKVRQLIKQQSIAALK), 1818-1847 (QSIAALKIQSAFRGYNKRIKYQSVLQSIIK), 1868-1897 (TKAAVISLQSTYRGWKVRKQIRREHQAALK), 1891-1922 (EHQAALKIQSAFRMAKARKQFRLFKTAALVIQ), 1941-1972 (LRHAVLMLQSMWKGKTLRRQLQRQHKCAIIIQ), 1964-1995 (QHKCAIIIQSYYRMHVQQKKWKIMKKAALLIQ), 2014-2043 (TKAAVVTLQSAYRGMKVRKRIKDCNKAAVT), 2037-2068 (CNKAAVTIQSKYRAYKTKKKYATYRASAIIIQ), 2087-2118 (LKKTAIKIQSVYRGIRVRRHIQHMHRAATFIK), 2110-2141 (MHRAATFIKAMFKMHQSRISYHTMRKAAIVIQ), 2160-2191 (ILKAVKILQASFRGVRVRRTLRKMQIAATLIQ), 2183-2212 (MQIAATLIQSNYRRYRQQTYFNKLKKITKT), 2233-2264 (LRHSVIYIQAIFRGKKARRHLKMMHIAATLIQ), 2256-2287 (MHIAATLIQRRFRTLMMRRRFLSLKKTAIWIQ), 2305-2336 (VQNAVIKIQSSYRRWMIRKRMREMHRAATFIQ), 2378-2409 (QRHSAVILQAAFRGMKTRRHLKSMHSSATLIQ), 2401-2432 (MHSSATLIQSRFRSLLVRRRFISLKKATIFVQ), 2451-2482 (LRKSAITIQSSYRRLMVKKKLQEMQRAAVLIQ), 2524-2555 (QWHSAVVIQAAYKGMKARQLLREKHKAAIIIQ), 2659-2690 (RTQAVICIQSYYRGFKVRKDIQNMHRAATLIQ), 2682-2713 (MHRAATLIQSFYRMHRAKVDYQTKKTAIVVIQ), 2732-2761 (VQKSVRTIQPAFRGMKVRQKLKNLSEEKMA), 2853-2884 (QKRAAITLQHYFRTWQTRKQFLLYRKAAVVLQ), 2903-2932 (IRSSVIIIQARSKGFIQKRKFQEIKNSTIK), 2926-2957 (IKNSTIKIQAIWRRYRAKKYLCKVKAACKIQA), 2948-2979 (KVKAACKIQAWYRCWRAHKEYLAILKAVKIIQ), 3023-3054 (RHRATCLIQAHYRGYKGRQVFLRQKSAALVIQ), 3073-3104 (FKKSTVILQALVRGWLVRKRILEQRAKIRLLH), 3134-3163 (QVNSVICIQRWFRARLQRKRFIQKYHSIKK), 3175-3204 (QNRAASVIQKAVRHFLLRKKQEKFTSGIIK), and 3198-3229 (FTSGIIKIQALWRGYSWRKKNDCTKIKAIRLS).

The protein localises to the cytoplasm. It localises to the cytoskeleton. It is found in the spindle. The protein resides in the nucleus. Probable role in mitotic spindle regulation and coordination of mitotic processes. May have a preferential role in regulating neurogenesis. The sequence is that of Abnormal spindle-like microcephaly-associated protein homolog (ASPM) from Pongo pygmaeus (Bornean orangutan).